A 159-amino-acid polypeptide reads, in one-letter code: MSFRIGHGYDVHKFTSAKQNIIIGGVEIAYHLGLEAHSDGDVLIHALCDAIIGALGLGDIGKHFLDTDNQFKNIDSKFFLAEIKKMLDEKQYSISNIDCTIIAQAPKMLPHIEKMRACLANILEIQISQINIKATTTERLGFIGREEGIATHVVCLLYR.

A divalent metal cation-binding residues include Asp-10 and His-12. Residues 10–12 (DVH) and 37–38 (HS) contribute to the 4-CDP-2-C-methyl-D-erythritol 2-phosphate site. His-45 is an a divalent metal cation binding site. 4-CDP-2-C-methyl-D-erythritol 2-phosphate-binding positions include 59–61 (DIG), 64–68 (FLDTD), 103–109 (AQAPKML), 135–138 (TTTE), Phe-142, and Arg-145.

The protein belongs to the IspF family. As to quaternary structure, homotrimer. A divalent metal cation is required as a cofactor.

The catalysed reaction is 4-CDP-2-C-methyl-D-erythritol 2-phosphate = 2-C-methyl-D-erythritol 2,4-cyclic diphosphate + CMP. The protein operates within isoprenoid biosynthesis; isopentenyl diphosphate biosynthesis via DXP pathway; isopentenyl diphosphate from 1-deoxy-D-xylulose 5-phosphate: step 4/6. In terms of biological role, involved in the biosynthesis of isopentenyl diphosphate (IPP) and dimethylallyl diphosphate (DMAPP), two major building blocks of isoprenoid compounds. Catalyzes the conversion of 4-diphosphocytidyl-2-C-methyl-D-erythritol 2-phosphate (CDP-ME2P) to 2-C-methyl-D-erythritol 2,4-cyclodiphosphate (ME-CPP) with a corresponding release of cytidine 5-monophosphate (CMP). This chain is 2-C-methyl-D-erythritol 2,4-cyclodiphosphate synthase, found in Francisella tularensis subsp. holarctica (strain OSU18).